The primary structure comprises 427 residues: Glucan 1,3-beta-glucosidase 2 (427 aa).

The first 17 residues, 1-17, serve as a signal peptide directing secretion; that stretch reads MLISTFIISSLLSIALA. The active-site Proton donor is the Glu-217. Cystine bridges form between Cys-299–Cys-426 and Cys-324–Cys-355. The Nucleophile role is filled by Glu-316.

Belongs to the glycosyl hydrolase 5 (cellulase A) family.

It localises to the secreted. It catalyses the reaction Successive hydrolysis of beta-D-glucose units from the non-reducing ends of (1-&gt;3)-beta-D-glucans, releasing alpha-glucose.. In terms of biological role, beta-glucanases participate in the metabolism of beta-glucan, the main structural component of the cell wall. It could also function biosynthetically as a transglycosylase. The chain is Glucan 1,3-beta-glucosidase 2 (EXG2) from Wickerhamomyces anomalus (Yeast).